The chain runs to 540 residues: Glucose-6-phosphate isomerase (540 aa).

The active-site Proton donor is Glu-350. Catalysis depends on residues His-381 and Lys-503.

This sequence belongs to the GPI family.

It is found in the cytoplasm. The catalysed reaction is alpha-D-glucose 6-phosphate = beta-D-fructose 6-phosphate. The protein operates within carbohydrate biosynthesis; gluconeogenesis. It functions in the pathway carbohydrate degradation; glycolysis; D-glyceraldehyde 3-phosphate and glycerone phosphate from D-glucose: step 2/4. In terms of biological role, catalyzes the reversible isomerization of glucose-6-phosphate to fructose-6-phosphate. The chain is Glucose-6-phosphate isomerase from Burkholderia pseudomallei (strain 1106a).